The following is a 247-amino-acid chain: Cell division protein ZapD (247 aa).

This sequence belongs to the ZapD family. Interacts with FtsZ.

The protein resides in the cytoplasm. Its function is as follows. Cell division factor that enhances FtsZ-ring assembly. Directly interacts with FtsZ and promotes bundling of FtsZ protofilaments, with a reduction in FtsZ GTPase activity. The polypeptide is Cell division protein ZapD (Shigella flexneri).